Reading from the N-terminus, the 291-residue chain is MKIADKTVTRAILERHGFTFKKLFGQNFLTDTNILQKIVDTAEIDKTVNVIEIGPGIGALTEFLAENAAEVMAFEIDDRLVPILADTLRDFDNIKVVNEDILKSDLQTRIKEFANPDLPIKVVANLPYYITTPILMHLIESKIPFAEFVVMMQKEVADRISAQPSTKAYGSLSIAVQYYMTAKIAFIVPRTVFVPAPNVDSAILKMTRREQPLVQVQDEDFFFCVGKAAFVHRRKTLWNNLTSHFGKSEEVKVKLEQALEAADIKPSIRGEELTITDFARLADALREVDLK.

Positions 27, 29, 54, 75, 100, and 125 each coordinate S-adenosyl-L-methionine.

Belongs to the class I-like SAM-binding methyltransferase superfamily. rRNA adenine N(6)-methyltransferase family. RsmA subfamily.

It is found in the cytoplasm. The catalysed reaction is adenosine(1518)/adenosine(1519) in 16S rRNA + 4 S-adenosyl-L-methionine = N(6)-dimethyladenosine(1518)/N(6)-dimethyladenosine(1519) in 16S rRNA + 4 S-adenosyl-L-homocysteine + 4 H(+). Specifically dimethylates two adjacent adenosines (A1518 and A1519) in the loop of a conserved hairpin near the 3'-end of 16S rRNA in the 30S particle. May play a critical role in biogenesis of 30S subunits. The polypeptide is Ribosomal RNA small subunit methyltransferase A (Streptococcus mutans serotype c (strain ATCC 700610 / UA159)).